Reading from the N-terminus, the 114-residue chain is Hydrogenase maturation factor HypA (114 aa).

Histidine 2 contacts Ni(2+). Residues cysteine 73, cysteine 76, cysteine 89, and cysteine 92 each coordinate Zn(2+).

Belongs to the HypA/HybF family.

Involved in the maturation of [NiFe] hydrogenases. Required for nickel insertion into the metal center of the hydrogenase. In Azoarcus sp. (strain BH72), this protein is Hydrogenase maturation factor HypA.